The following is a 102-amino-acid chain: UPF0473 protein SAS1551 (102 aa).

Belongs to the UPF0473 family.

This Staphylococcus aureus (strain MSSA476) protein is UPF0473 protein SAS1551.